The sequence spans 64 residues: U-poneritoxin(01)-Om1a (64 aa).

The signal sequence occupies residues 1–27 (MKPSGLTFAFLVVFMMAIMYNSVQVTA). Positions 28 to 45 (DADADAEAEALANALAEA) are excised as a propeptide. Methionine 62 is subject to Methionine amide.

Post-translationally, truncated sequences of this peptide have also been found in the venom. It is possible they have been cleaved in the venom. As to expression, expressed by the venom gland.

It localises to the secreted. Antimicrobial peptide with activities against E.coli (MIC=1.3 uM), S.aureus (MIC=3.1 uM), and S.cerevisiae (MIC=50 uM). Also shows histamine-releasing activity (32.9% at 10 uM). Does not show hemolytic activity, even at 50 uM. It is a short peptide for which no alpha-helical region has been predicted. This is U-poneritoxin(01)-Om1a from Odontomachus monticola (Trap-jaw ant).